A 688-amino-acid chain; its full sequence is Potassium-transporting ATPase ATP-binding subunit (688 aa).

A run of 4 helical transmembrane segments spans residues 37 to 57 (FLVY…LVGI), 65 to 85 (ILGI…AEAI), 219 to 239 (IALQ…TVSL), and 262 to 282 (VALL…SIGI). D313 acts as the 4-aspartylphosphate intermediate in catalysis. Residues D350, E354, 383-390 (FTAKTRMS), and K401 contribute to the ATP site. Residues D524 and D528 each coordinate Mg(2+). 3 helical membrane-spanning segments follow: residues 594 to 614 (FAII…LNIM), 622 to 642 (AIFS…PLAL), and 668 to 688 (IIVP…IGIV).

This sequence belongs to the cation transport ATPase (P-type) (TC 3.A.3) family. Type IA subfamily. The system is composed of three essential subunits: KdpA, KdpB and KdpC.

The protein resides in the cell membrane. The enzyme catalyses K(+)(out) + ATP + H2O = K(+)(in) + ADP + phosphate + H(+). Its function is as follows. Part of the high-affinity ATP-driven potassium transport (or Kdp) system, which catalyzes the hydrolysis of ATP coupled with the electrogenic transport of potassium into the cytoplasm. This subunit is responsible for energy coupling to the transport system and for the release of the potassium ions to the cytoplasm. The chain is Potassium-transporting ATPase ATP-binding subunit from Clostridium botulinum (strain Eklund 17B / Type B).